Reading from the N-terminus, the 199-residue chain is Interferon kappa (199 aa).

Positions 1-21 (MTPKFLWLVALVALYIPPIQS) are cleaved as a signal peptide. 2 cysteine pairs are disulfide-bonded: C24–C119 and C49–C162.

This sequence belongs to the alpha/beta interferon family. As to expression, expressed at low levels in peritoneal macrophages.

The protein localises to the secreted. Functionally, may play a role in the regulation of immune cell function. The sequence is that of Interferon kappa (Ifnk) from Mus musculus (Mouse).